Here is a 284-residue protein sequence, read N- to C-terminus: MTASLSLGWPAPAKLNLFLHINAQRHDGYHELQTLFQFIEHCDYLDFKVLDTPKLKLHSNMSSAVADSDNLILKAAKSLQQRTDCQLGAEIWLDKRLPMGGGLGGGSSDAATTLVALNQLWETGLSLRELGEIGLKLGADVPVFINGFSAFAEGVGEKLQNVEPAEPWYLVLTPQVHVSTAEVFQDPDLPRNTPKLSLESLMNSPWQNDCQTLVAKRYPQVAKTLAWLLEYAPSRMTGTGACVFGQFEQEQEAKDVLAKLPASIQGFVAKGANISPLMLRLAQC.

Residue lysine 14 is part of the active site. Residue 98–108 (PMGGGLGGGSS) coordinates ATP. Aspartate 140 is a catalytic residue.

Belongs to the GHMP kinase family. IspE subfamily.

The enzyme catalyses 4-CDP-2-C-methyl-D-erythritol + ATP = 4-CDP-2-C-methyl-D-erythritol 2-phosphate + ADP + H(+). The protein operates within isoprenoid biosynthesis; isopentenyl diphosphate biosynthesis via DXP pathway; isopentenyl diphosphate from 1-deoxy-D-xylulose 5-phosphate: step 3/6. In terms of biological role, catalyzes the phosphorylation of the position 2 hydroxy group of 4-diphosphocytidyl-2C-methyl-D-erythritol. This is 4-diphosphocytidyl-2-C-methyl-D-erythritol kinase from Shewanella pealeana (strain ATCC 700345 / ANG-SQ1).